The chain runs to 470 residues: ATP synthase subunit beta (470 aa).

157–164 (GGAGVGKT) provides a ligand contact to ATP.

This sequence belongs to the ATPase alpha/beta chains family. As to quaternary structure, F-type ATPases have 2 components, CF(1) - the catalytic core - and CF(0) - the membrane proton channel. CF(1) has five subunits: alpha(3), beta(3), gamma(1), delta(1), epsilon(1). CF(0) has three main subunits: a(1), b(2) and c(9-12). The alpha and beta chains form an alternating ring which encloses part of the gamma chain. CF(1) is attached to CF(0) by a central stalk formed by the gamma and epsilon chains, while a peripheral stalk is formed by the delta and b chains.

Its subcellular location is the cell inner membrane. It catalyses the reaction ATP + H2O + 4 H(+)(in) = ADP + phosphate + 5 H(+)(out). Functionally, produces ATP from ADP in the presence of a proton gradient across the membrane. The catalytic sites are hosted primarily by the beta subunits. The polypeptide is ATP synthase subunit beta (Geotalea daltonii (strain DSM 22248 / JCM 15807 / FRC-32) (Geobacter daltonii)).